The following is a 359-amino-acid chain: Acetoin catabolism protein X (359 aa).

It localises to the cell membrane. The protein operates within ketone degradation; acetoin degradation. Functionally, essential for acetoin catabolism. This is Acetoin catabolism protein X (acoX) from Cupriavidus necator (strain ATCC 17699 / DSM 428 / KCTC 22496 / NCIMB 10442 / H16 / Stanier 337) (Ralstonia eutropha).